The sequence spans 500 residues: Abscisic acid 8'-hydroxylase 3 (500 aa).

The chain crosses the membrane as a helical span at residues 3-23; the sequence is ASFVIVIVISFFISLAFMCYV. Position 426 (C426) interacts with heme.

Belongs to the cytochrome P450 family. Heme is required as a cofactor.

The protein localises to the membrane. It catalyses the reaction 2-cis-(+)-abscisate + reduced [NADPH--hemoprotein reductase] + O2 = (+)-8'-hydroxyabscisate + oxidized [NADPH--hemoprotein reductase] + H2O + H(+). It participates in plant hormone degradation; abscisic acid degradation. In terms of biological role, involved in the oxidative degradation of abscisic acid. The sequence is that of Abscisic acid 8'-hydroxylase 3 (CYP707A7) from Oryza sativa subsp. japonica (Rice).